The following is a 324-amino-acid chain: Homeobox protein Nkx-2.5 (324 aa).

The homeobox DNA-binding region spans 138 to 197 (RRKPRVLFSQAQVYELERRFKQQRYLSAPERDQLASVLKLTSTQVKIWFQNRRYKCKRQR).

It belongs to the NK-2 homeobox family. As to quaternary structure, homodimer (via the homeobox); binds DNA as homodimer. Interacts (via the homeobox) with TBX5 (via the T-box); this complex binds DNA. Interacts with HIPK1 and HIPK2, but not HIPK3. Interacts with the C-terminal zinc finger of GATA4 through its homeobox domain. Also interacts with JARID2 which represses its ability to activate transcription of ANF. Interacts with FBLIM1. Interacts with TBX18. Interacts with histone methyltransferase NSD2 (via HMG box). Interacts with NEDD9. Interacts with TBX1. As to expression, expressed only in the heart.

Its subcellular location is the nucleus. In terms of biological role, transcription factor required for the development of the heart and the spleen. During heart development, acts as a transcriptional activator of NPPA/ANF in cooperation with GATA4. May cooperate with TBX2 to negatively modulate expression of NPPA/ANF in the atrioventricular canal. Binds to the core DNA motif of NPPA promoter. Together with PBX1, required for spleen development through a mechanism that involves CDKN2B repression. Positively regulates transcription of genes such as COL3A1 and MMP2, resulting in increased pulmonary endothelial fibrosis in response to hypoxia. The chain is Homeobox protein Nkx-2.5 (NKX2-5) from Homo sapiens (Human).